The sequence spans 434 residues: MSIEKIWAREILDSRGNPTVEVDLYTAKGLFRAAVPSGASTGIYEALELRDGDKQRYLGKGVLKAVDHINSTIAPALISSGLSVVEQEKLDNLMLELDGTENKSKFGANAILGVSLAVCKAGAAERELPLYRHIAQLAGNSDLILPVPAFNVINGGSHAGNKLAMQEFMILPVGAESFRDAMRLGAEVYHTLKGVIKDKYGKDATNVGDEGGFAPNILENSEALELVKEAIDKAGYTEKIVIGMDVAASEFYRDGKYDLDFKSPTDPSRYITGDQLGALYQDFVRDYPVVSIEDPFDQDDWAAWSKFTANVGIQIVGDDLTVTNPKRIERAVEEKACNCLLLKVNQIGSVTEAIQACKLAQENGWGVMVSHRSGETEDTFIADLVVGLCTGQIKTGAPCRSERLAKYNQLMRIEEELGDEARFAGHNFRNPSVL.

At Ser-2 the chain carries N-acetylserine. An N6-acetyllysine modification is found at Lys-5. Thr-26 is modified (phosphothreonine). Residue Ser-40 participates in Mg(2+) binding. Residue Tyr-44 is modified to Phosphotyrosine. Residue Lys-60 is modified to N6-acetyllysine; alternate. Lys-60 is modified (N6-succinyllysine; alternate). An N6-acetyllysine modification is found at Lys-64. Residue Lys-89 is modified to N6-acetyllysine; alternate. Lys-89 carries the N6-succinyllysine; alternate modification. Substrate is bound by residues His-158 and Glu-167. N6-acetyllysine occurs at positions 193, 197, and 199. N6-acetyllysine; alternate is present on Lys-202. Lys-202 participates in a covalent cross-link: Glycyl lysine isopeptide (Lys-Gly) (interchain with G-Cter in SUMO2); alternate. Catalysis depends on Glu-210, which acts as the Proton donor. N6-acetyllysine; alternate is present on residues Lys-228 and Lys-233. At Lys-228 the chain carries N6-succinyllysine; alternate. The residue at position 233 (Lys-233) is an N6-(2-hydroxyisobutyryl)lysine; alternate. A Mg(2+)-binding site is contributed by Asp-245. Lys-256 carries the post-translational modification N6-acetyllysine. The residue at position 263 (Ser-263) is a Phosphoserine. Tyr-287 bears the Phosphotyrosine mark. Ser-291 bears the Phosphoserine mark. Mg(2+) contacts are provided by Glu-293 and Asp-318. Substrate contacts are provided by Glu-293 and Asp-318. N6-acetyllysine occurs at positions 335 and 343. Lys-343 acts as the Proton acceptor in catalysis. Residues 370-373 (SHRS) and Lys-394 contribute to the substrate site. An N6-acetyllysine modification is found at Lys-406.

Belongs to the enolase family. Mammalian enolase is composed of 3 isozyme subunits, alpha, beta and gamma, which can form homodimers or heterodimers which are cell-type and development-specific. The cofactor is Mg(2+). The alpha/alpha homodimer is expressed in embryo and in most adult tissues. The alpha/beta heterodimer and the beta/beta homodimer are found in striated muscle, and the alpha/gamma heterodimer and the gamma/gamma homodimer in neurons.

The protein resides in the cytoplasm. It localises to the cell membrane. The enzyme catalyses (2R)-2-phosphoglycerate = phosphoenolpyruvate + H2O. It functions in the pathway carbohydrate degradation; glycolysis; pyruvate from D-glyceraldehyde 3-phosphate: step 4/5. In terms of biological role, has neurotrophic and neuroprotective properties on a broad spectrum of central nervous system (CNS) neurons. Binds, in a calcium-dependent manner, to cultured neocortical neurons and promotes cell survival. This chain is Gamma-enolase (ENO2), found in Homo sapiens (Human).